Consider the following 423-residue polypeptide: MRKTIEPISGIKAQLSVPGSKSITHRALMLAALADDESEIRNPLVADDTTITADALVQMGVGVQWKPGSVLVAPPSKRWSQPSEPILLGNSGTSTRLLLALAATGVGDFTFDGAPRLRQRPVKPLVSALEMLGARFDCTETDGFLPLRVIAHGLSGGKVLVDARQSGQFLSAVLMAAPCAGGEVTVEWLEPVASYPYVAMTLAMMGERGIDFRKDRANRVIVPAPQRYAGGRWTVEADCSSASYLWAAAALTGGDVLTHPLSPDSLQGDCRFLGILERMGCRVTWEEDGVRVVSSGELRPVDLDLNEMPDMVPTLAILAAFAGGVSRIRNVAHLRVKESDRLQAVSSELGKLGVPNRELPDGLEIRGGAATSPKVGIDPHDDHRIAMAFAVAGLRVGGVEIEDAEVVAKSFPTFWETFEKLKS.

3 residues coordinate 3-phosphoshikimate: Lys-21, Ser-22, and Arg-26. A phosphoenolpyruvate-binding site is contributed by Lys-21. The phosphoenolpyruvate site is built by Gly-92 and Arg-120. Ser-166, Gln-168, Ser-194, Asp-310, and Lys-337 together coordinate 3-phosphoshikimate. Residue Gln-168 coordinates phosphoenolpyruvate. Asp-310 functions as the Proton acceptor in the catalytic mechanism. Residues Arg-341, Arg-384, and Lys-409 each coordinate phosphoenolpyruvate.

The protein belongs to the EPSP synthase family. In terms of assembly, monomer.

It localises to the cytoplasm. The enzyme catalyses 3-phosphoshikimate + phosphoenolpyruvate = 5-O-(1-carboxyvinyl)-3-phosphoshikimate + phosphate. The protein operates within metabolic intermediate biosynthesis; chorismate biosynthesis; chorismate from D-erythrose 4-phosphate and phosphoenolpyruvate: step 6/7. Functionally, catalyzes the transfer of the enolpyruvyl moiety of phosphoenolpyruvate (PEP) to the 5-hydroxyl of shikimate-3-phosphate (S3P) to produce enolpyruvyl shikimate-3-phosphate and inorganic phosphate. The chain is 3-phosphoshikimate 1-carboxyvinyltransferase from Syntrophobacter fumaroxidans (strain DSM 10017 / MPOB).